Reading from the N-terminus, the 60-residue chain is uncharacterized protein (60 aa).

This is an uncharacterized protein from Acidianus convivator (ATV).